The primary structure comprises 40 residues: Accessory gland-specific peptide 57Db (40 aa).

The first 17 residues, 1 to 17, serve as a signal peptide directing secretion; it reads MKITSALVLLFAGVAFA.

Lumen fluid of male accessory glands, becomes seminal fluid.

Its subcellular location is the secreted. In terms of biological role, transferred from male to female during mating and may affect egglaying and behavior after mating. This Drosophila melanogaster (Fruit fly) protein is Accessory gland-specific peptide 57Db (Mst57Db).